Consider the following 377-residue polypeptide: Alanine racemase (377 aa).

The Proton acceptor; specific for D-alanine role is filled by Lys-33. Lys-33 is modified (N6-(pyridoxal phosphate)lysine). Arg-134 provides a ligand contact to substrate. Tyr-267 functions as the Proton acceptor; specific for L-alanine in the catalytic mechanism. Met-315 is a binding site for substrate.

Belongs to the alanine racemase family. Pyridoxal 5'-phosphate serves as cofactor.

It catalyses the reaction L-alanine = D-alanine. The protein operates within amino-acid biosynthesis; D-alanine biosynthesis; D-alanine from L-alanine: step 1/1. Catalyzes the interconversion of L-alanine and D-alanine. May also act on other amino acids. The chain is Alanine racemase (alr) from Treponema pallidum subsp. pallidum (strain SS14).